A 531-amino-acid polypeptide reads, in one-letter code: Sterol 26-hydroxylase, mitochondrial (531 aa).

Residues 1–33 (MAALGCARLRWALRGAGRGLCPHGARAKAAIPA) constitute a mitochondrion transit peptide. Lys283 carries the N6-acetyllysine modification. The sterol-binding stretch occupies residues 384–398 (PLLKAVLKETLRLYP). Cys476 serves as a coordination point for heme. Lys509 and Lys520 each carry N6-acetyllysine.

This sequence belongs to the cytochrome P450 family. In terms of assembly, interacts with HSP70; this interaction is required for initial targeting to mitochondria. The cofactor is heme. As to expression, expressed in the neural retina and underlying retinal pigment epithelium (at protein level). Expressed in the gray and white matter of cerebellum (at protein level).

The protein resides in the mitochondrion inner membrane. It carries out the reaction 5beta-cholestane-3alpha,7alpha,12alpha-triol + 6 reduced [adrenodoxin] + 3 O2 + 5 H(+) = (25R)-3alpha,7alpha,12alpha-trihydroxy-5beta-cholestan-26-oate + 6 oxidized [adrenodoxin] + 4 H2O. The enzyme catalyses cholestanol + 2 reduced [adrenodoxin] + O2 + 2 H(+) = (25R)-26-hydroxycholestanol + 2 oxidized [adrenodoxin] + H2O. The catalysed reaction is (25R)-3beta-hydroxycholest-5-en-7-one-26-al + 2 reduced [adrenodoxin] + O2 + H(+) = (25R)-3beta-hydroxycholest-5-en-7-one-26-oate + 2 oxidized [adrenodoxin] + H2O. It catalyses the reaction (25R)-3beta,26-dihydroxycholest-5-en-7-one + 2 reduced [adrenodoxin] + O2 + 2 H(+) = (25R)-3beta-hydroxycholest-5-en-7-one-26-al + 2 oxidized [adrenodoxin] + 2 H2O. It carries out the reaction 7-oxocholesterol + 2 reduced [adrenodoxin] + O2 + 2 H(+) = (25R)-3beta,26-dihydroxycholest-5-en-7-one + 2 oxidized [adrenodoxin] + H2O. The enzyme catalyses calciol + 2 reduced [adrenodoxin] + O2 + 2 H(+) = calcidiol + 2 oxidized [adrenodoxin] + H2O. The catalysed reaction is (25R)-5beta-cholestane-3alpha,7alpha,12alpha,26-tetrol + 2 reduced [adrenodoxin] + O2 + 2 H(+) = (25R)-3alpha,7alpha,12alpha-trihydroxy-5beta-cholestan-26-al + 2 oxidized [adrenodoxin] + 2 H2O. It catalyses the reaction 2 reduced [adrenodoxin] + cholesterol + O2 + 2 H(+) = (25R)-cholest-5-ene-3beta,26-diol + 2 oxidized [adrenodoxin] + H2O. It carries out the reaction (25R)-3beta,4beta-dihydroxycholest-5-en-26-al + 2 reduced [adrenodoxin] + O2 + H(+) = (25R)-3beta,4beta-dihydroxycholest-5-en-26-oate + 2 oxidized [adrenodoxin] + H2O. The enzyme catalyses (25R)-4beta,26-dihydroxycholesterol + 2 reduced [adrenodoxin] + O2 + 2 H(+) = (25R)-3beta,4beta-dihydroxycholest-5-en-26-al + 2 oxidized [adrenodoxin] + 2 H2O. The catalysed reaction is 4beta-hydroxycholesterol + 2 reduced [adrenodoxin] + O2 + 2 H(+) = (25R)-4beta,26-dihydroxycholesterol + 2 oxidized [adrenodoxin] + H2O. It catalyses the reaction (25R)-3beta-hydroxy-5-cholesten-26-al + 2 reduced [adrenodoxin] + O2 + H(+) = (25R)-3beta-hydroxy-5-cholestenoate + 2 oxidized [adrenodoxin] + H2O. It carries out the reaction (25R)-cholest-5-ene-3beta,26-diol + 2 reduced [adrenodoxin] + O2 + 2 H(+) = (25R)-3beta-hydroxy-5-cholesten-26-al + 2 oxidized [adrenodoxin] + 2 H2O. The enzyme catalyses (25R)-3alpha,7alpha,12alpha-trihydroxy-5beta-cholestan-26-al + 2 reduced [adrenodoxin] + O2 + H(+) = (25R)-3alpha,7alpha,12alpha-trihydroxy-5beta-cholestan-26-oate + 2 oxidized [adrenodoxin] + H2O. The catalysed reaction is 5beta-cholestane-3alpha,7alpha,12alpha-triol + 2 reduced [adrenodoxin] + O2 + 2 H(+) = (25R)-5beta-cholestane-3alpha,7alpha,12alpha,26-tetrol + 2 oxidized [adrenodoxin] + H2O. It functions in the pathway hormone biosynthesis; cholecalciferol biosynthesis. The protein operates within steroid metabolism; cholesterol degradation. Its pathway is lipid metabolism; bile acid biosynthesis. Functionally, cytochrome P450 monooxygenase that catalyzes regio- and stereospecific hydroxylation of cholesterol and its derivatives. Hydroxylates (with R stereochemistry) the terminal methyl group of cholesterol side-chain in a three step reaction to yield at first a C26 alcohol, then a C26 aldehyde and finally a C26 acid. Regulates cholesterol homeostasis by catalyzing the conversion of excess cholesterol to bile acids via both the 'neutral' (classic) and the 'acid' (alternative) pathways. May also regulate cholesterol homeostasis via generation of active oxysterols, which act as ligands for NR1H2 and NR1H3 nuclear receptors, modulating the transcription of genes involved in lipid metabolism. Plays a role in cholestanol metabolism in the cerebellum. Similarly to cholesterol, hydroxylates cholestanol and may facilitate sterol diffusion through the blood-brain barrier to the systemic circulation for further degradation. Also hydroxylates retinal 7-ketocholesterol, a noxious oxysterol with pro-inflammatory and pro-apoptotic effects, and may play a role in its elimination from the retinal pigment epithelium. May play a redundant role in vitamin D biosynthesis. Catalyzes 25-hydroxylation of vitamin D3 that is required for its conversion to a functionally active form. In Homo sapiens (Human), this protein is Sterol 26-hydroxylase, mitochondrial.